The chain runs to 100 residues: Large ribosomal subunit protein bL21 (100 aa).

The protein belongs to the bacterial ribosomal protein bL21 family. Part of the 50S ribosomal subunit. Contacts proteins L15 and L20.

Binds directly to 23S rRNA, probably serving to organize its structure. The protein is Large ribosomal subunit protein bL21 of Deinococcus radiodurans (strain ATCC 13939 / DSM 20539 / JCM 16871 / CCUG 27074 / LMG 4051 / NBRC 15346 / NCIMB 9279 / VKM B-1422 / R1).